We begin with the raw amino-acid sequence, 211 residues long: Degradation in the endoplasmic reticulum protein 1 (211 aa).

N-acetylmethionine is present on Met1. The Cytoplasmic segment spans residues 1–14 (MDAVILNLLGDIPL). The chain crosses the membrane as a helical span at residues 15–32 (VTRLWTIGCLVLSGLTSL). Residues 33–67 (RIVDPGKVVYSYDLVFKKGQYGRLLYSIFDYGAFN) lie on the Lumenal side of the membrane. A helical transmembrane segment spans residues 68 to 85 (WISMINIFVSANHLSTLE). Residues 86-92 (NSFNLRR) are Cytoplasmic-facing. A helical transmembrane segment spans residues 93 to 109 (KFCWIIFLLLVILVKMT). The Lumenal segment spans residues 110–117 (SIEQPAAS). A helical transmembrane segment spans residues 118-133 (LGVLLHENLVYYELKK). Residues 134–149 (NGNQMNVRFFGAIDVS) lie on the Cytoplasmic side of the membrane. Residues 150-165 (PSIFPIYMNAVMYFVY) form a helical membrane-spanning segment. At 166-168 (KRS) the chain is on the lumenal side. Residues 169-189 (WLEIAMNFMPGHVIYYMDDII) traverse the membrane as a helical segment. Residues 190–211 (GKIYGIDLCKSPYDWFRNTETP) lie on the Cytoplasmic side of the membrane.

The protein belongs to the derlin family. As to quaternary structure, component of the HRD1 ubiquitin ligase complex which contains the E3 ligase HRD1, its cofactors HRD3, USA1 and DER1, substrate recruiting factor YOS9 and CDC48-binding protein UBX2. Within the complex, interacts with USA1 (via C-terminus). In ERAD-L, HRD3 and YOS9 jointly bind misfolded glycoproteins in the endoplasmic reticulum (ER) lumen. Movement of ERAD-L substrates through the ER membrane is facilitated by HRD1 and DER1 which have lateral gates facing each other and which distort the membrane region between the lateral gates, making it much thinner than a normal phospholipid bilayer. Substrates insert into the membrane as a hairpin loop with one strand interacting with DER1 and the other with HRD1. The HRD1 complex interacts with the heterotrimeric CDC48-NPL4-UFD1 ATPase complex which is recruited by UBX2 via its interaction with CDC48 and which moves ubiquitinated substrates to the cytosol for targeting to the proteasome. N-terminally acetylated by acetyltransferase NatB which enhances DER1 stability and is required for ERAD-L function.

The protein localises to the endoplasmic reticulum membrane. In terms of biological role, component of the endoplasmic reticulum-associated degradation (ERAD) pathway. Specifically required for the ERAD-L pathway which mediates the degradation of proteins with misfolded lumenal domains within the endoplasmic reticulum (ER). Facilitates retrotranslocation of misfolded proteins from the ER lumen through the ER membrane in conjunction with HRD1. Both proteins have lateral gates facing each other and distort the membrane region between the lateral gates, making it much thinner than a normal phospholipid bilayer. Substrates insert into the membrane as a hairpin loop with one strand interacting with DER1 and the other with HRD1. The polypeptide is Degradation in the endoplasmic reticulum protein 1 (DER1) (Saccharomyces cerevisiae (strain ATCC 204508 / S288c) (Baker's yeast)).